Reading from the N-terminus, the 457-residue chain is L-asparaginase-like protein GA18140 (457 aa).

The first 20 residues, 1–20 (MRYLCRAQLLSLLLLPLLKA), serve as a signal peptide directing secretion. 3 cysteine pairs are disulfide-bonded: cysteine 72/cysteine 78, cysteine 172/cysteine 188, and cysteine 327/cysteine 354.

This sequence belongs to the Ntn-hydrolase family.

This Drosophila pseudoobscura pseudoobscura (Fruit fly) protein is L-asparaginase-like protein GA18140.